Reading from the N-terminus, the 100-residue chain is Small ribosomal subunit protein uS14c (100 aa).

It belongs to the universal ribosomal protein uS14 family. As to quaternary structure, part of the 30S ribosomal subunit.

The protein localises to the plastid. It is found in the chloroplast. In terms of biological role, binds 16S rRNA, required for the assembly of 30S particles. The sequence is that of Small ribosomal subunit protein uS14c from Cyanidium caldarium (Red alga).